Reading from the N-terminus, the 172-residue chain is Myosin regulatory light chain 2, smooth muscle major isoform (172 aa).

The segment covering 1–16 has biased composition (basic residues); sequence MSSKRAKAKTTKKRPQ. The segment at 1-20 is disordered; it reads MSSKRAKAKTTKKRPQRATS. Ser2 bears the N-acetylserine mark. 3 consecutive EF-hand domains span residues 29–64, 98–133, and 134–169; these read SQIQEFKEAFNMIDQNRDGFIDKEDLHDMLASMGKN, DPEDVIRNAFACFDEEASGFIHEDHLRELLTTMGDR, and FTDEEVDEMYREAPIDKKGNFNYVEFTRILKHGAKD. The Ca(2+) site is built by Asp42, Asn44, Asp46, and Asp53.

Myosin is a hexamer of 2 heavy chains and 4 light chains.

Functionally, myosin regulatory subunit that plays an important role in regulation of both smooth muscle and nonmuscle cell contractile activity. Implicated in cytokinesis, receptor capping, and cell locomotion. The chain is Myosin regulatory light chain 2, smooth muscle major isoform from Gallus gallus (Chicken).